We begin with the raw amino-acid sequence, 935 residues long: Myocardin (935 aa).

An MEF2C-binding motif is present at residues 12 to 27; the sequence is IRRKFRSVLQLRLQQR. RPEL repeat units follow at residues 18–43, 62–87, and 106–131; these read SVLQ…PPLK, DSLR…QAST, and DDLN…PMDS. Positions 37–73 are disordered; sequence GLIPPLKGPTEFHDPRKQLDSAKTEDSLRRKGRNRSD. Over residues 46–73 the composition is skewed to basic and acidic residues; sequence TEFHDPRKQLDSAKTEDSLRRKGRNRSD. Positions 153 to 201 are HDAC5-binding; the sequence is FEDDSSRDGLSPDQARSEDPQGSTGSTPDIKSTEAPLDTIQDLTPGSES. Residues 155–283 are disordered; sequence DDSSRDGLSP…SPPPMDSAYA (129 aa). Composition is skewed to polar residues over residues 172–182 and 206–216; these read PQGSTGSTPDI and AASQPGNQSDP. Over residues 244-261 the composition is skewed to basic residues; the sequence is NRHKKPKDPKPKVKKLKY. Residues 287 to 322 are a coiled coil; that stretch reads QQQQLFLQLQILSQQQQQQQQQQQQQQQQQQQQQRF. The tract at residues 337-378 is disordered; the sequence is EQMARNPNPSSTPLSNTPLSPVKNSISGQTGVSSLKPGPLPP. The span at 342–357 shows a compositional bias: low complexity; it reads NPNPSSTPLSNTPLSP. A compositionally biased stretch (polar residues) spans 358–369; that stretch reads VKNSISGQTGVS. Residues 380 to 414 form the SAP domain; it reads LDDLKVSELRQQLRIRGLPVSGTKTALVDRLRPFQ. 4 positions are modified to phosphoserine; by GSK3-beta: Ser-454, Ser-458, Ser-462, and Ser-466. The disordered stretch occupies residues 498–518; the sequence is ESLLSSLNGGSGPSEPDGLDS. Positions 519 to 563 form a coiled coil; sequence EKDKMLVEKQKVINQLTWKLRQEQRQVEELRMQLQKQKSSCSDQK. The segment at 579-605 is disordered; sequence SCPFAPQQASGKGQGHSSDSPPPACET. A compositionally biased stretch (polar residues) spans 585 to 597; sequence QQASGKGQGHSSD. Residues Ser-624, Ser-628, Ser-632, and Ser-636 each carry the phosphoserine; by GSK3-beta modification. Residues 654-731 are disordered; sequence NNHYFLASSS…DAVKQQMTRS (78 aa). The segment covering 660 to 691 has biased composition (polar residues); it reads ASSSGAQRENHGVSSPSSSQGCAQMTGLQSSD. Residues 695-709 are compositionally biased toward low complexity; it reads PTFSIPSPTFSKSSS. The tract at residues 714–935 is required for interaction with and ubiquitination by STUB1; sequence ITQPPSYEDA…SPMDLHLQQW (222 aa). Phosphoserine; by MAPK1 and MAPK3 occurs at positions 812, 859, and 866. Thr-893 is subject to Phosphothreonine; by MAPK1 and MAPK3.

As to quaternary structure, homodimer. Interacts with MLLT7/FOXO4. Interacts with SRF, its association does not depend on specific DNA sequences for ternary complex formation. Interacts (via C-terminal) with EP300 (via CREB-binding domain). Interacts with HDAC4 and HDAC5. Interacts with MEF2C. Interacts (via C-terminus) with STUB1/CHIP. Interacts with PURB. In terms of processing, ubiquitinated; by STUB1/CHIP at the C-terminus, leading to its degradation by the proteasome. Phosphorylation by GSK3B is required for STUB1/CHIP-mediated ubiquitination. Phosphorylation negatively regulates transcriptional activity. Phosphorylated; by GSK3B. Expressed in smooth muscle cell-containing tissues. Expressed in the heart. Expressed in the aorta and bladder. Weakly expression in the lung, testis and kidney. Weakly expressed in the stomach. Weakly expressed in the intestine and colon. As to expression, expressed in the heart. In terms of tissue distribution, predominantly expressed in cardiac muscle. Predominantly expressed in smooth muscle cell-rich tissues.

Its subcellular location is the nucleus speckle. Functionally, smooth muscle cells (SM) and cardiac muscle cells-specific transcriptional factor which uses the canonical single or multiple CArG boxes DNA sequence. Acts as a cofactor of serum response factor (SRF) with the potential to modulate SRF-target genes. Plays a crucial role in cardiogenesis, urinary bladder development, and differentiation of the smooth muscle cell lineage (myogenesis). Positively regulates the transcription of genes involved in vascular smooth muscle contraction. Its function is as follows. Positively regulates the activation of smooth muscle cell gene promoter regions. Positively regulates the activation of smooth muscle cell gene promoter regions. Activation of the MYH6 promoter is enhanced in the presence of MEF2C. The protein is Myocardin (Myocd) of Mus musculus (Mouse).